A 242-amino-acid polypeptide reads, in one-letter code: Small ribosomal subunit protein uS2 (242 aa).

Belongs to the universal ribosomal protein uS2 family.

This Idiomarina loihiensis (strain ATCC BAA-735 / DSM 15497 / L2-TR) protein is Small ribosomal subunit protein uS2.